Here is a 741-residue protein sequence, read N- to C-terminus: Zinc finger and BTB domain-containing protein 20 (741 aa).

Positions 1-17 (MLERKKPKTAENQKASE) are enriched in basic and acidic residues. The tract at residues 1 to 28 (MLERKKPKTAENQKASEENEITQPGGSS) is disordered. A BTB domain is found at 104–167 (CDVTVRIHGS…MYSGVLRVSQ (64 aa)). The disordered stretch occupies residues 203-235 (GIQDSGQDTPRGTPESGTSGQSSDTESGYLQSH). Residues 206 to 235 (DSGQDTPRGTPESGTSGQSSDTESGYLQSH) are compositionally biased toward polar residues. The residue at position 211 (Thr211) is a Phosphothreonine. Lys330 participates in a covalent cross-link: Glycyl lysine isopeptide (Lys-Gly) (interchain with G-Cter in SUMO1); alternate. Lys330 is covalently cross-linked (Glycyl lysine isopeptide (Lys-Gly) (interchain with G-Cter in SUMO2); alternate). Residues 350–440 (RNESEECTED…SSPERSNESE (91 aa)) form a disordered region. The residue at position 353 (Ser353) is a Phosphoserine. The span at 354 to 367 (EECTEDTDQAEGTE) shows a compositional bias: acidic residues. Thr357 bears the Phosphothreonine mark. Lys371 is covalently cross-linked (Glycyl lysine isopeptide (Lys-Gly) (interchain with G-Cter in SUMO2)). Low complexity predominate over residues 404–423 (AEPAQPEQAAEAPAESSAQP). 4 consecutive C2H2-type zinc fingers follow at residues 578-600 (YECT…MFVH), 606-628 (HQCS…MVTH), 634-656 (YQCS…MRLH), and 662-684 (YECY…VALH). Phosphothreonine occurs at positions 690 and 695. The segment at 715–737 (YVCSVCPAKFDQIEQFNDHMRMH) adopts a C2H2-type 5 zinc-finger fold. Lys723 is covalently cross-linked (Glycyl lysine isopeptide (Lys-Gly) (interchain with G-Cter in SUMO2)).

As to quaternary structure, can homodimerize. Binds to DNA. In terms of processing, sumoylated with SUMO1. As to expression, specifically expressed in early hippocampal neurons, cerebellar granule cells and gliogenic progenitors as well as in differentiated glia. Expressed in adult and aged myogenic satellite cells.

The protein resides in the nucleus. May be a transcription factor that may be involved in hematopoiesis, oncogenesis, and immune responses. Plays a role in postnatal myogenesis, may be involved in the regulation of satellite cells self-renewal. The polypeptide is Zinc finger and BTB domain-containing protein 20 (Zbtb20) (Mus musculus (Mouse)).